The chain runs to 514 residues: 1-pyrroline-5-carboxylate dehydrogenase (514 aa).

Residues E286 and C320 contribute to the active site.

The protein belongs to the aldehyde dehydrogenase family. RocA subfamily.

The enzyme catalyses L-glutamate 5-semialdehyde + NAD(+) + H2O = L-glutamate + NADH + 2 H(+). Its pathway is amino-acid degradation; L-proline degradation into L-glutamate; L-glutamate from L-proline: step 2/2. This is 1-pyrroline-5-carboxylate dehydrogenase from Staphylococcus haemolyticus (strain JCSC1435).